The chain runs to 749 residues: Disintegrin and metalloproteinase domain-containing protein 10 (749 aa).

The N-terminal stretch at 1–18 is a signal peptide; that stretch reads MVLPTVLILLLSWAAGLG. The propeptide occupies 19 to 214; that stretch reads GQYGNPLNKY…MGPELLRKKR (196 aa). The Cysteine switch motif lies at 171 to 178; the sequence is GGCADHSV. Position 173 (cysteine 173) interacts with Zn(2+). The Extracellular portion of the chain corresponds to 215–673; the sequence is TTLAERNTCQ…SPQLYENIAE (459 aa). The 237-residue stretch at 221–457 folds into the Peptidase M12B domain; that stretch reads NTCQLYIQTD…KRNNCFVESG (237 aa). Disulfide bonds link cysteine 223-cysteine 314, cysteine 345-cysteine 452, cysteine 400-cysteine 436, cysteine 461-cysteine 496, cysteine 472-cysteine 485, cysteine 474-cysteine 480, cysteine 484-cysteine 516, cysteine 504-cysteine 512, cysteine 511-cysteine 537, cysteine 525-cysteine 544, cysteine 531-cysteine 563, cysteine 556-cysteine 568, cysteine 573-cysteine 599, cysteine 581-cysteine 608, cysteine 583-cysteine 598, cysteine 595-cysteine 640, and cysteine 633-cysteine 646. Residues asparagine 268 and asparagine 279 are each glycosylated (N-linked (GlcNAc...) asparagine). Residue histidine 384 participates in Zn(2+) binding. Glutamate 385 is an active-site residue. 2 residues coordinate Zn(2+): histidine 388 and histidine 394. N-linked (GlcNAc...) asparagine glycosylation occurs at asparagine 440. Residues 458–552 form the Disintegrin domain; sequence QPICGNGMVE…LCPASDPKPN (95 aa). N-linked (GlcNAc...) asparagine glycosylation is present at asparagine 552. The helical transmembrane segment at 674-697 threads the bilayer; the sequence is WIVAHWWAVLLMGIALIMLMAGFI. Residues 698 to 749 lie on the Cytoplasmic side of the membrane; the sequence is KICSVHTPSSNPKLPPPKPLPGTLKRRRPPQPIQQPPRQRPRESYQMGHMRR. Residues 705-749 are disordered; it reads PSSNPKLPPPKPLPGTLKRRRPPQPIQQPPRQRPRESYQMGHMRR. Positions 709–716 match the SH3-binding motif; the sequence is PKLPPPKP. Phosphothreonine is present on threonine 720. An SH3-binding motif is present at residues 723-729; the sequence is RRRPPQP. The segment at 735–749 is interaction with AP2A1, AP2A2 and AP2M1; it reads RQRPRESYQMGHMRR.

In terms of assembly, forms a ternary EFNA5-EPHA3-ADAM10 complex mediating EFNA5 extracellular domain shedding by ADAM10 which regulates the EFNA5-EPHA3 complex internalization and function, the cleavage occurs in trans, with ADAM10 and its substrate being on the membranes of opposing cells. Interacts with the clathrin adapter AP2 complex subunits AP2A1, AP2A2, AP2B1, and AP2M1; this interaction facilitates ADAM10 endocytosis from the plasma membrane during long-term potentiation in hippocampal neurons. Forms a ternary complex composed of ADAM10, EPHA4 and CADH1; within the complex, ADAM10 cleaves CADH1 which disrupts adherens junctions. Interacts with EPHA2. Interacts with NGF in a divalent cation-dependent manner. Interacts with TSPAN14; the interaction promotes ADAM10 maturation and cell surface expression. Interacts with TSPAN5, TSPAN10, TSPAN14, TSPAN15, TSPAN17 and TSPAN33; these interactions regulate ADAM10 substrate specificity, endocytosis and turnover. Interacts (via extracellular domain) with TSPAN33 (via extracellular domain) and (via cytoplasmic domain) with AFDN; interaction with TSPAN33 allows the docking of ADAM10 to zonula adherens through a PDZ11-dependent interaction between TSPAN33 and PLEKHA7 while interaction with AFDN locks ADAM10 at zonula adherens. Interacts with DLG1; this interaction recruits ADAM10 to the cell membrane during long-term depression in hippocampal neurons. Interacts (via extracellular domain) with BACE1 (via extracellular domain). Interacts with FAM171A1. It depends on Zn(2+) as a cofactor. In terms of processing, the precursor is cleaved by furin and PCSK7. Expressed in brain, kidney, lung, spleen, ovary and testis.

Its subcellular location is the cell membrane. It localises to the golgi apparatus membrane. The protein resides in the cytoplasmic vesicle. It is found in the clathrin-coated vesicle. The protein localises to the cell projection. Its subcellular location is the axon. It localises to the dendrite. The protein resides in the cell junction. It is found in the adherens junction. The protein localises to the cytoplasm. It carries out the reaction Endopeptidase of broad specificity.. Its activity is regulated as follows. Catalytically inactive when the propeptide is intact and associated with the mature enzyme. The disintegrin and cysteine-rich regions modulate access of substrates to exerts an inhibitory effect on the cleavage of ADAM10 substrates. Its function is as follows. Transmembrane metalloprotease which mediates the ectodomain shedding of a myriad of transmembrane proteins, including adhesion proteins, growth factor precursors and cytokines being essential for development and tissue homeostasis. Associates with six members of the tetraspanin superfamily TspanC8 which regulate its exit from the endoplasmic reticulum and its substrate selectivity. Cleaves the membrane-bound precursor of TNF-alpha at '76-Ala-|-Val-77' to its mature soluble form. Responsible for the proteolytical release of soluble JAM3 from endothelial cells surface. Responsible for the proteolytic release of several other cell-surface proteins, including heparin-binding epidermal growth-like factor, ephrin-A2, CD44, CDH2 and for constitutive and regulated alpha-secretase cleavage of amyloid precursor protein (APP). Contributes to the normal cleavage of the cellular prion protein. Involved in the cleavage of the adhesion molecule L1 at the cell surface and in released membrane vesicles, suggesting a vesicle-based protease activity. Also controls the proteolytic processing of Notch and mediates lateral inhibition during neurogenesis. Required for the development of type 1 transitional B cells into marginal zone B cells, probably by cleaving Notch. Responsible for the FasL ectodomain shedding and for the generation of the remnant ADAM10-processed FasL (FasL APL) transmembrane form. Also cleaves the ectodomain of the integral membrane proteins CORIN and ITM2B. Mediates the proteolytic cleavage of LAG3, leading to release the secreted form of LAG3. Mediates the proteolytic cleavage of IL6R and IL11RA, leading to the release of secreted forms of IL6R and IL11RA. Enhances the cleavage of CHL1 by BACE1. Cleaves NRCAM. Cleaves TREM2, resulting in shedding of the TREM2 ectodomain. Involved in the development and maturation of glomerular and coronary vasculature. During development of the cochlear organ of Corti, promotes pillar cell separation by forming a ternary complex with CADH1 and EPHA4 and cleaving CADH1 at adherens junctions. May regulate the EFNA5-EPHA3 signaling. Regulates leukocyte transmigration as a sheddase for the adherens junction protein VE-cadherin/CDH5 in endothelial cells. The protein is Disintegrin and metalloproteinase domain-containing protein 10 (Adam10) of Rattus norvegicus (Rat).